Here is a 412-residue protein sequence, read N- to C-terminus: Divalent metal cation transporter MntH (412 aa).

The Cytoplasmic portion of the chain corresponds to 1–19; it reads MTNYRVESSSGRAARKMRL. A helical membrane pass occupies residues 20 to 39; that stretch reads ALMGPAFIAAIGYIDPGNFA. Residues 40–51 lie on the Periplasmic side of the membrane; that stretch reads TNIQAGASFGYQ. The chain crosses the membrane as a helical span at residues 52–71; the sequence is LLWVVVWANLMAMLIQILSA. Residues 72 to 95 lie on the Cytoplasmic side of the membrane; the sequence is KLGIATGKNLAEQIRDHYPRPFVW. Residues 96-118 form a helical membrane-spanning segment; it reads FYWVQAEIIAMATDLAEFIGAAI. Over 119–125 the chain is Periplasmic; sequence GFKLILG. Residues 126–145 traverse the membrane as a helical segment; that stretch reads VSLLQGAVLTGIATFLILML. At 146-155 the chain is on the cytoplasmic side; that stretch reads QRRGQKPLEK. Residues 156-175 form a helical membrane-spanning segment; the sequence is VIGGLLLFVAAAYIVELIFS. The Periplasmic portion of the chain corresponds to 176 to 196; sequence QPNLAQLGKGMVIPSLPTSEA. Residues 197–220 traverse the membrane as a helical segment; sequence VFLAAGVLGATIMPHVIYLHSSLT. Topologically, residues 221–238 are cytoplasmic; sequence QHLHGGSRQQRYSATKWD. The chain crosses the membrane as a helical span at residues 239–258; it reads VAIAMTIAGFVNLAMMATAA. At 259 to 276 the chain is on the periplasmic side; it reads AAFHFSGHTGVADLDEAY. A helical membrane pass occupies residues 277-297; the sequence is LTLQPLLSHAAATVFGLSLVA. The Cytoplasmic segment spans residues 298-327; that stretch reads AGLSSTVVGTLAGQVVMQGFIRFHIPLWVR. Residues 328-344 form a helical membrane-spanning segment; the sequence is RTVTMLPSFIVILMGLD. Over 345 to 350 the chain is Periplasmic; it reads PTRILV. The helical transmembrane segment at 351-370 threads the bilayer; sequence MSQVLLSFGIALALVPLLIF. Over 371–387 the chain is Cytoplasmic; it reads TSDSKLMGDLVNSKRVK. The chain crosses the membrane as a helical span at residues 388–406; that stretch reads QTGWVIVVLVVALNIWLLV. Over 407–412 the chain is Periplasmic; sequence GTALGL.

The protein belongs to the NRAMP family.

It is found in the cell inner membrane. Its function is as follows. H(+)-stimulated, divalent metal cation uptake system. The polypeptide is Divalent metal cation transporter MntH (Escherichia coli O127:H6 (strain E2348/69 / EPEC)).